Consider the following 1537-residue polypeptide: Dicer-like protein 1 (1537 aa).

The tract at residues 38 to 68 is disordered; sequence SDPAESSVDVQDEHSSDDSDNENEVFPKQND. The Helicase ATP-binding domain maps to 133–314; the sequence is LFERAKTQNT…EAATRLETFL (182 aa). 146 to 153 serves as a coordination point for ATP; sequence LDTGSGKT. The DEAH box signature appears at 259–262; it reads DEAH. The region spanning 459–618 is the Helicase C-terminal domain; that stretch reads ELSKHFNDTT…EILPEDRILH (160 aa). Residues 651–741 form the Dicer dsRNA-binding fold domain; it reads AIAILARYAS…NSIYHRRLPA (91 aa). The PAZ domain occupies 891 to 1019; the sequence is DTVSFVHNND…ICAEPLRISA (129 aa). 2 RNase III domains span residues 1043–1202 and 1253–1405; these read IALE…LSGG and ARHV…VDSK. Glu-1294, Asp-1391, and Glu-1394 together coordinate Mg(2+). Positions 1439–1507 constitute a DRBM domain; that stretch reads TFLHNKLTNE…SEKALAVLDG (69 aa). Zn(2+) is bound by residues Cys-1451, His-1478, Cys-1519, and Cys-1521.

This sequence belongs to the helicase family. Dicer subfamily. It depends on Mg(2+) as a cofactor. The cofactor is Mn(2+).

Its function is as follows. Dicer-like endonuclease involved in cleaving double-stranded RNA in the RNA interference (RNAi) pathway. Produces 21 to 25 bp dsRNAs (siRNAs) which target the selective destruction of homologous RNAs leading to sequence-specific suppression of gene expression, called post-transcriptional gene silencing (PTGS). Part of a broad host defense response against viral infection and transposons. The sequence is that of Dicer-like protein 1 (dcl1) from Aspergillus fumigatus (strain ATCC MYA-4609 / CBS 101355 / FGSC A1100 / Af293) (Neosartorya fumigata).